The primary structure comprises 211 residues: Metalloproteinase inhibitor 3 (211 aa).

Positions 1–23 (MTPWLGLVVLLSCWSLGHWGTEA) are cleaved as a signal peptide. Cys24 provides a ligand contact to Zn(2+). 2 involved in metalloproteinase-binding regions span residues 24–27 (CTCS) and 88–89 (ES). 6 cysteine pairs are disulfide-bonded: Cys24/Cys91, Cys26/Cys118, Cys36/Cys143, Cys145/Cys192, Cys150/Cys155, and Cys163/Cys184. The region spanning 24-143 (CTCSPSHPQD…GLNYRYHLGC (120 aa)) is the NTR domain. The mediates interaction with EFEMP1 stretch occupies residues 105–188 (TGRVYEGKMY…SKHYACIRQK (84 aa)).

The protein belongs to the protease inhibitor I35 (TIMP) family. As to quaternary structure, interacts with EFEMP1. Interacts with KDR.

The protein resides in the secreted. It localises to the extracellular space. The protein localises to the extracellular matrix. Its function is as follows. Mediates a variety of processes including matrix regulation and turnover, inflammation, and angiogenesis, through reversible inhibition of zinc protease superfamily enzymes, primarily matrix metalloproteinases (MMPs). Regulates extracellular matrix (ECM) remodeling through inhibition of matrix metalloproteinases (MMP) including MMP-1, MMP-2, MMP-3, MMP-7, MMP-9, MMP-13, MMP-14 and MMP-15. Additionally, modulates the processing of amyloid precursor protein (APP) and apolipoprotein E receptor ApoER2 by inhibiting two alpha-secretases ADAM10 and ADAM17. Functions as a tumor suppressor and a potent inhibitor of angiogenesis. Exerts its anti-angiogenic effect by directly interacting with vascular endothelial growth factor (VEGF) receptor-2/KDR, preventing its binding to the VEGFA ligand. Selectively induces apoptosis in angiogenic endothelial cells through a caspase-independent cell death pathway. Mechanistically, inhibits matrix-induced focal adhesion kinase PTK2 tyrosine phosphorylation and association with paxillin/PXN and disrupts the incorporation of ITGB3, PTK2 and PXN into focal adhesion contacts on the matrix. The polypeptide is Metalloproteinase inhibitor 3 (Timp3) (Rattus norvegicus (Rat)).